Consider the following 251-residue polypeptide: Probable transcriptional regulatory protein SYO3AOP1_0685 (251 aa).

The protein belongs to the TACO1 family.

It is found in the cytoplasm. The sequence is that of Probable transcriptional regulatory protein SYO3AOP1_0685 from Sulfurihydrogenibium sp. (strain YO3AOP1).